Consider the following 147-residue polypeptide: Cyanate hydratase (147 aa).

Active-site residues include Arg88, Glu91, and Ser114.

The protein belongs to the cyanase family.

It catalyses the reaction cyanate + hydrogencarbonate + 3 H(+) = NH4(+) + 2 CO2. Catalyzes the reaction of cyanate with bicarbonate to produce ammonia and carbon dioxide. This chain is Cyanate hydratase, found in Dechloromonas aromatica (strain RCB).